A 674-amino-acid chain; its full sequence is DNA ligase (674 aa).

NAD(+) is bound by residues 34-38 (DADFD), 82-83 (SL), and glutamate 107. The active-site N6-AMP-lysine intermediate is the lysine 109. Residues arginine 130, glutamate 170, lysine 286, and lysine 310 each coordinate NAD(+). Residues cysteine 404, cysteine 407, cysteine 423, and cysteine 429 each coordinate Zn(2+). Residues 593–674 (KPAQTLEGIT…FTRLLETGEA (82 aa)) form the BRCT domain.

It belongs to the NAD-dependent DNA ligase family. LigA subfamily. Requires Mg(2+) as cofactor. The cofactor is Mn(2+).

It carries out the reaction NAD(+) + (deoxyribonucleotide)n-3'-hydroxyl + 5'-phospho-(deoxyribonucleotide)m = (deoxyribonucleotide)n+m + AMP + beta-nicotinamide D-nucleotide.. In terms of biological role, DNA ligase that catalyzes the formation of phosphodiester linkages between 5'-phosphoryl and 3'-hydroxyl groups in double-stranded DNA using NAD as a coenzyme and as the energy source for the reaction. It is essential for DNA replication and repair of damaged DNA. The polypeptide is DNA ligase (Corynebacterium aurimucosum (strain ATCC 700975 / DSM 44827 / CIP 107346 / CN-1) (Corynebacterium nigricans)).